The sequence spans 459 residues: ATP-dependent protease ATPase subunit HslU (459 aa).

ATP-binding positions include Val-18, 60-65, Asp-272, Glu-337, and Arg-409; that span reads GVGKTE.

It belongs to the ClpX chaperone family. HslU subfamily. A double ring-shaped homohexamer of HslV is capped on each side by a ring-shaped HslU homohexamer. The assembly of the HslU/HslV complex is dependent on binding of ATP.

Its subcellular location is the cytoplasm. Functionally, ATPase subunit of a proteasome-like degradation complex; this subunit has chaperone activity. The binding of ATP and its subsequent hydrolysis by HslU are essential for unfolding of protein substrates subsequently hydrolyzed by HslV. HslU recognizes the N-terminal part of its protein substrates and unfolds these before they are guided to HslV for hydrolysis. This Thermoanaerobacter sp. (strain X514) protein is ATP-dependent protease ATPase subunit HslU.